We begin with the raw amino-acid sequence, 516 residues long: GMP synthase [glutamine-hydrolyzing] (516 aa).

A Glutamine amidotransferase type-1 domain is found at 5 to 199 (SIIVLDFGSQ…ARNICGVTEK (195 aa)). The active-site Nucleophile is cysteine 82. Catalysis depends on residues histidine 173 and glutamate 175. The GMPS ATP-PPase domain maps to 200 to 391 (WKMEHFLKEQ…LGLPESMINR (192 aa)). Residue 227–233 (SGGVDSS) participates in ATP binding.

Homodimer.

It carries out the reaction XMP + L-glutamine + ATP + H2O = GMP + L-glutamate + AMP + diphosphate + 2 H(+). The protein operates within purine metabolism; GMP biosynthesis; GMP from XMP (L-Gln route): step 1/1. Functionally, catalyzes the synthesis of GMP from XMP. The polypeptide is GMP synthase [glutamine-hydrolyzing] (Sulfurimonas denitrificans (strain ATCC 33889 / DSM 1251) (Thiomicrospira denitrificans (strain ATCC 33889 / DSM 1251))).